The sequence spans 2896 residues: 3'-5' exoribonuclease HELZ2 (2896 aa).

2 C3H1-type zinc fingers span residues 90–114 (VCHY…RSRE) and 217–246 (GQPP…HSAV). Residues 287–311 (LYCPACLVTCHSQEAFENHCASSEH) form a C2H2-type; atypical zinc finger. Residues 327 to 357 (SPPPGLSKFELCPKPDLCEYGDACTKAHSAQ) form a C3H1-type 3 zinc finger. Residues 770–1126 (VALIAGWGPG…VVLSTVHTCQ (357 aa)) form the UvrD-like helicase ATP-binding domain. Residue 791-798 (GPFGTGKT) participates in ATP binding. The segment at 810–1306 (RRPETKVLIC…ESTEAEDAEA (497 aa)) is interaction with THRAP3. The DEAA box signature appears at 914-917 (DEAA). S1253 carries the phosphoserine modification. 3 consecutive short sequence motifs (LXXLL motif) follow at residues 1322-1326 (LRELL), 1365-1369 (LRKLL), and 1420-1424 (LVQLL). In terms of domain architecture, RNB spans 1581-1938 (REDCRAFLTF…VLQRQILLAL (358 aa)). The LXXLL motif 4 motif lies at 2259-2263 (LEGLP). An interaction with THRAP3 region spans residues 2382 to 2896 (PSRFLERQTY…RVCRRPTMPS (515 aa)). Positions 2400 to 2675 (LNPSQNVAVR…HMLDTQYRMH (276 aa)) constitute a UvrD-like helicase ATP-binding 2 domain. 2421–2428 (GPPGTGKT) is a binding site for ATP. Residues 2476 to 2480 (LAGLL) carry the LXXLL motif 5 motif.

The protein belongs to the DNA2/NAM7 helicase family. In terms of assembly, interacts with PPARA (via DNA-binding domain) and PPARG; the interaction stimulates the transcriptional activity of PPARA and PPARG. Interacts with THRAP3; the interaction is direct and HELZ2 and THRAP3 synergistically enhance the transcriptional activity of PPARG. It is probably part of the peroxisome proliferator activated receptor alpha interacting complex (PRIC). In terms of tissue distribution, expressed in various tissues including heart, pancreas, skeletal muscle, colon, spleen, liver, kidney, lung, peripheral blood and placenta.

It is found in the cytoplasm. It carries out the reaction Exonucleolytic cleavage in the 3'- to 5'-direction to yield nucleoside 5'-phosphates.. The catalysed reaction is ATP + H2O = ADP + phosphate + H(+). Can degrade highly structured RNAs through its concerted ATP-dependent RNA helicase and 3' to 5' exoribonuclease activities. Shows a strong preference for pyrimidine over purine residues for its nuclease activity. Acts as a transcriptional coactivator for a number of nuclear receptors including PPARA, PPARG, THRA, THRB and RXRA. This chain is 3'-5' exoribonuclease HELZ2, found in Homo sapiens (Human).